The sequence spans 76 residues: UPF0346 protein OEOE_1017 (76 aa).

This sequence belongs to the UPF0346 family.

The polypeptide is UPF0346 protein OEOE_1017 (Oenococcus oeni (strain ATCC BAA-331 / PSU-1)).